Reading from the N-terminus, the 650-residue chain is Laccase-like multicopper oxidase 1 (650 aa).

An N-terminal signal peptide occupies residues methionine 1–alanine 20. Plastocyanin-like domains are found at residues glutamine 41–aspartate 151, glutamate 162–asparagine 360, and lysine 439–aspartate 595. An intrachain disulfide couples cysteine 46 to cysteine 254. 2 N-linked (GlcNAc...) asparagine glycosylation sites follow: asparagine 55 and asparagine 83. Cu cation-binding residues include histidine 87, histidine 89, histidine 133, and histidine 135. Residues histidine 501, histidine 504, histidine 506, histidine 576, cysteine 577, histidine 578, and histidine 582 each contribute to the Cu cation site. Asparagine 620 carries an N-linked (GlcNAc...) asparagine glycan.

This sequence belongs to the multicopper oxidase family. Monomer. N-glycosylation Asn-55 and Asn-83 is involved in folding, conformational stability and laccase activity.

It carries out the reaction 2 2',3,4-trihydroxy-trans-chalcone + O2 + 2 H(+) = 2 3',4'-dihydroxyaurone + 2 H2O. With respect to regulation, retains almost half of its activity in presence of high salt concentrations up to 100 mM NaCl. Retains also more than 85% of its original activity in the presence of 1 mM EDTA, indicating a satisfactory resistance towards chelators, which is rare among metal-containing enzyme. The activity drops significantly in the presence of NaN(3) or SDS. Appears more active in the presence of methanol compared to ethanol, but acetone or DMSO addition severely affect remaining laccase activity. Its function is as follows. Yellow laccase-like multicopper oxidase that is able to oxidize a variety of phenolic compounds including standard laccase substrates such as 2'-azino-bis(3-ethylbenzothiazoline-6-sulphonic acid) (ABTS) and 2,6-dimethoxyphenol (2,6-DMP). The existence of an ortho-hydroxy group is crucial for oxidation since pyrogallol and catechol, which contain ortho-hydroxy groups, are readily oxidized, which is not the case for resorcinol and hydroquinone, that contain meta- and para-hydroxy groups, respectively. The same is also true for the existence of a methoxy group in an ortho-position, since 2,6-DMP, guaiacol and ferulic and caffeic acids are also rather easily oxidized compared with the corresponding unsubstituted compound. Can be used for the bioconversion of 2',3,4-trihy-droxychalcone to 3',4'-dihydroxy-aurone, a bioactive aurone recently shown to possess inhibitory activity against several isoforms of the histone deacetylase complex (HDAC). The chain is Laccase-like multicopper oxidase 1 from Thermothelomyces thermophilus (strain ATCC 42464 / BCRC 31852 / DSM 1799) (Sporotrichum thermophile).